A 384-amino-acid chain; its full sequence is Beta-ureidopropionase (384 aa).

The CN hydrolase domain maps to 72–344; the sequence is VHVGLVQNRI…DGLLVAKLDL (273 aa). The Proton acceptor role is filled by glutamate 119. The active-site Proton donor is the lysine 196. The active-site Nucleophile is the cysteine 233. At serine 378 the chain carries Phosphoserine.

Belongs to the carbon-nitrogen hydrolase superfamily. BUP family. As to quaternary structure, homodimer, homotetramer, homooctamer; can also form higher homooligomers. In terms of tissue distribution, detected in liver (at protein level).

The protein resides in the cytoplasm. The catalysed reaction is 3-(carbamoylamino)propanoate + H2O + 2 H(+) = beta-alanine + NH4(+) + CO2. The enzyme catalyses 3-(carbamoylamino)-2-methylpropanoate + H2O + 2 H(+) = (R)-3-amino-2-methylpropanoate + NH4(+) + CO2. It functions in the pathway amino-acid biosynthesis; beta-alanine biosynthesis. Its activity is regulated as follows. Strongly inhibited by 50 mM Zn(2+). Not inhibited by EDTA. Competitively inhibited by beta-alanine, 5-aminolevulinic acid (ALA), beta-aminoisobutyrate and 4-ureidobutyrate. Its function is as follows. Catalyzes a late step in pyrimidine degradation. Converts N-carbamoyl-beta-alanine (3-ureidopropanoate) into beta-alanine, ammonia and carbon dioxide. Likewise, converts N-carbamoyl-beta-aminoisobutyrate (3-ureidoisobutyrate) into beta-aminoisobutyrate, ammonia and carbon dioxide. The chain is Beta-ureidopropionase (UPB1) from Homo sapiens (Human).